Here is a 448-residue protein sequence, read N- to C-terminus: UDP-N-acetylmuramoylalanine--D-glutamate ligase (448 aa).

Residue Gly112–Thr118 coordinates ATP.

The protein belongs to the MurCDEF family.

The protein localises to the cytoplasm. The enzyme catalyses UDP-N-acetyl-alpha-D-muramoyl-L-alanine + D-glutamate + ATP = UDP-N-acetyl-alpha-D-muramoyl-L-alanyl-D-glutamate + ADP + phosphate + H(+). It functions in the pathway cell wall biogenesis; peptidoglycan biosynthesis. In terms of biological role, cell wall formation. Catalyzes the addition of glutamate to the nucleotide precursor UDP-N-acetylmuramoyl-L-alanine (UMA). In Acinetobacter baumannii (strain AB307-0294), this protein is UDP-N-acetylmuramoylalanine--D-glutamate ligase.